Consider the following 118-residue polypeptide: Small ribosomal subunit protein uS13 (118 aa).

Positions 94-118 are disordered; it reads SLPLRGQRTKTNARTRKGPRKPIRK.

The protein belongs to the universal ribosomal protein uS13 family. In terms of assembly, part of the 30S ribosomal subunit. Forms a loose heterodimer with protein S19. Forms two bridges to the 50S subunit in the 70S ribosome.

In terms of biological role, located at the top of the head of the 30S subunit, it contacts several helices of the 16S rRNA. In the 70S ribosome it contacts the 23S rRNA (bridge B1a) and protein L5 of the 50S subunit (bridge B1b), connecting the 2 subunits; these bridges are implicated in subunit movement. Contacts the tRNAs in the A and P-sites. In Shewanella woodyi (strain ATCC 51908 / MS32), this protein is Small ribosomal subunit protein uS13.